The primary structure comprises 119 residues: Large ribosomal subunit protein bL20 (119 aa).

The protein belongs to the bacterial ribosomal protein bL20 family.

Its function is as follows. Binds directly to 23S ribosomal RNA and is necessary for the in vitro assembly process of the 50S ribosomal subunit. It is not involved in the protein synthesizing functions of that subunit. The chain is Large ribosomal subunit protein bL20 from Caldanaerobacter subterraneus subsp. tengcongensis (strain DSM 15242 / JCM 11007 / NBRC 100824 / MB4) (Thermoanaerobacter tengcongensis).